The primary structure comprises 219 residues: Probable GTP-binding protein EngB (219 aa).

The 184-residue stretch at 24-207 (VQPEIAFAGR…HALIESWVRP (184 aa)) folds into the EngB-type G domain. GTP contacts are provided by residues 32 to 39 (GRSNAGKS), 59 to 63 (GRTQH), 81 to 84 (DLPG), 148 to 151 (TKCD), and 186 to 188 (FSA). Mg(2+) is bound by residues serine 39 and threonine 61.

Belongs to the TRAFAC class TrmE-Era-EngA-EngB-Septin-like GTPase superfamily. EngB GTPase family. Requires Mg(2+) as cofactor.

In terms of biological role, necessary for normal cell division and for the maintenance of normal septation. This chain is Probable GTP-binding protein EngB, found in Burkholderia multivorans (strain ATCC 17616 / 249).